The sequence spans 118 residues: Basic phospholipase A2 PA-13 (118 aa).

Disulfide bonds link cysteine 11–cysteine 71, cysteine 27–cysteine 117, cysteine 29–cysteine 45, cysteine 44–cysteine 98, cysteine 51–cysteine 91, cysteine 60–cysteine 84, and cysteine 78–cysteine 89. The Ca(2+) site is built by tyrosine 28, glycine 30, and glycine 32. Histidine 48 is an active-site residue. Aspartate 49 serves as a coordination point for Ca(2+). The active site involves aspartate 92.

The protein belongs to the phospholipase A2 family. Group I subfamily. D49 sub-subfamily. Ca(2+) is required as a cofactor. As to expression, expressed by the venom gland.

It is found in the secreted. The enzyme catalyses a 1,2-diacyl-sn-glycero-3-phosphocholine + H2O = a 1-acyl-sn-glycero-3-phosphocholine + a fatty acid + H(+). Functionally, PLA2 catalyzes the calcium-dependent hydrolysis of the 2-acyl groups in 3-sn-phosphoglycerides. The polypeptide is Basic phospholipase A2 PA-13 (Pseudechis australis (Mulga snake)).